The chain runs to 273 residues: 4-hydroxy-tetrahydrodipicolinate reductase (273 aa).

NAD(+)-binding positions include 11–16, 102–104, and 126–129; these read GALGRM, GTT, and SPNF. His-159 serves as the catalytic Proton donor/acceptor. His-160 provides a ligand contact to (S)-2,3,4,5-tetrahydrodipicolinate. Lys-163 serves as the catalytic Proton donor. Residue 169-170 participates in (S)-2,3,4,5-tetrahydrodipicolinate binding; sequence GT.

Belongs to the DapB family. In terms of assembly, homotetramer.

The protein localises to the cytoplasm. The catalysed reaction is (S)-2,3,4,5-tetrahydrodipicolinate + NAD(+) + H2O = (2S,4S)-4-hydroxy-2,3,4,5-tetrahydrodipicolinate + NADH + H(+). The enzyme catalyses (S)-2,3,4,5-tetrahydrodipicolinate + NADP(+) + H2O = (2S,4S)-4-hydroxy-2,3,4,5-tetrahydrodipicolinate + NADPH + H(+). It functions in the pathway amino-acid biosynthesis; L-lysine biosynthesis via DAP pathway; (S)-tetrahydrodipicolinate from L-aspartate: step 4/4. Catalyzes the conversion of 4-hydroxy-tetrahydrodipicolinate (HTPA) to tetrahydrodipicolinate. This is 4-hydroxy-tetrahydrodipicolinate reductase from Buchnera aphidicola subsp. Cinara cedri (strain Cc).